The sequence spans 583 residues: L-galactono-1,4-lactone dehydrogenase 2, mitochondrial (583 aa).

A mitochondrion-targeting transit peptide spans 1-36; sequence MRRLLLAGILRRASSSPSSHHHLHLVRALSASSPLP. Residues 37–78 constitute a propeptide, removed in mature form; the sequence is ASDADLRKYAGYALLLLGCGAATYYSFPLPPDALHKKAVPFK. Residues 45–61 traverse the membrane as a helical segment; it reads YAGYALLLLGCGAATYY. One can recognise an FAD-binding PCMH-type domain in the interval 95-266; the sequence is THEVHTRVLL…AEVTLQCVER (172 aa).

FAD serves as cofactor.

The protein resides in the mitochondrion membrane. The catalysed reaction is L-galactono-1,4-lactone + 4 Fe(III)-[cytochrome c] = L-dehydroascorbate + 4 Fe(II)-[cytochrome c] + 5 H(+). It functions in the pathway cofactor biosynthesis; L-ascorbate biosynthesis. Functionally, involved in the biosynthesis of ascorbic acid. This Oryza sativa subsp. japonica (Rice) protein is L-galactono-1,4-lactone dehydrogenase 2, mitochondrial (GLDH2).